The sequence spans 417 residues: Phosphoglycerate kinase 2 (417 aa).

Ser2 is modified (N-acetylserine). Phosphoserine occurs at positions 2 and 4. Residue Lys11 is modified to N6-acetyllysine. (2R)-3-phosphoglycerate contacts are provided by Val23, Asp24, Phe25, Asn26, Gln38, Arg39, Ser62, His63, Gly65, and Arg66. An N6-acetyllysine mark is found at Lys75, Lys86, and Lys97. The (2R)-3-phosphoglycerate site is built by Leu122 and Arg123. N6-acetyllysine is present on residues Lys131 and Lys146. Residues His170 and Arg171 each coordinate (2R)-3-phosphoglycerate. Tyr196 is subject to Phosphotyrosine. Lys199 bears the N6-acetyllysine mark. Gly214 lines the ADP pocket. Gly214 is a binding site for CDP. Residues Ala215 and Lys216 each coordinate AMP. Ala215 is an ATP binding site. Ala215 contributes to the Mg(2+) binding site. Residues Ala218 and Asp219 each coordinate Mg(2+). Asp219 is a binding site for CDP. Residue Lys220 coordinates AMP. Lys220 serves as a coordination point for ATP. Gly238 lines the ADP pocket. Gly238 is a CDP binding site. Gly239 provides a ligand contact to AMP. Gly239 is an ATP binding site. N6-acetyllysine occurs at positions 267 and 291. Ala313 serves as a coordination point for AMP. ATP is bound at residue Ala313. CDP-binding residues include Gly338 and Phe343. Phe343 contributes to the ADP binding site. Glu344 serves as a coordination point for AMP. Positions 344, 375, and 376 each coordinate ATP. Asp375 is a binding site for Mg(2+).

Belongs to the phosphoglycerate kinase family. Monomer. It depends on Mg(2+) as a cofactor. Testis specific.

It localises to the cytoplasm. The catalysed reaction is (2R)-3-phosphoglycerate + ATP = (2R)-3-phospho-glyceroyl phosphate + ADP. It functions in the pathway carbohydrate degradation; glycolysis; pyruvate from D-glyceraldehyde 3-phosphate: step 2/5. In terms of biological role, essential for sperm motility and male fertility but is not required for the completion of spermatogenesis. The protein is Phosphoglycerate kinase 2 of Sus scrofa (Pig).